The sequence spans 558 residues: Tektin-5 (558 aa).

Residues 347 to 381 (ISEETDVKNKLQTQLAKILQEIFQAENTIMLLERA) adopt a coiled-coil conformation.

The protein belongs to the tektin family. As to quaternary structure, microtubule inner protein component of sperm flagellar doublet microtubules. Interacts with TEKT3. Post-translationally, ubiquitinated, leading to its degradation. Deubiquitinated by USP16, promoting its stability. Specifically expressed in testis.

Its subcellular location is the cytoplasm. The protein localises to the cytoskeleton. It localises to the flagellum axoneme. Sperm-specific microtubule inner protein (MIP) part of the dynein-decorated doublet microtubules (DMTs) in flagellar axoneme. Forms an extensive interaction network in different conformations that reinforces the helix bundle composed by other tektin proteins (TEKT1 to TEKT4) and MIPs to anchor the tektin bundle onto the tubulin wall of A-tubule of the sperm flagellum. The chain is Tektin-5 from Rattus norvegicus (Rat).